Consider the following 460-residue polypeptide: Spermatogenesis-defective protein 39 homolog (460 aa).

Position 21 is a phosphothreonine (Thr-21). The tract at residues 70 to 101 (SIKETAGSSGSTSEGREQMKGRNSFYTQLPKP) is disordered. Positions 73–82 (ETAGSSGSTS) are enriched in low complexity. Phosphothreonine is present on Thr-115. 3 positions are modified to phosphoserine: Ser-119, Ser-122, and Ser-128. Polar residues predominate over residues 121–133 (QSLSDALSDTPAK). Residues 121 to 141 (QSLSDALSDTPAKTYSPELGR) are disordered. At Thr-130 the chain carries Phosphothreonine.

The protein belongs to the SPE39 family. As to quaternary structure, interacts with VPS33B. Associates with the homotypic fusion and vacuole protein sorting (HOPS) complex; impaired by VPS33B. Interacts with RAB11A.

It is found in the cytoplasm. The protein resides in the cytoplasmic vesicle. Its subcellular location is the early endosome. It localises to the recycling endosome. The protein localises to the late endosome. In terms of biological role, proposed to be involved in endosomal maturation implicating in part VPS33B. In epithelial cells, the VPS33B:VIPAS39 complex may play a role in the apical RAB11A-dependent recycling pathway and in the maintenance of the apical-basolateral polarity. May play a role in lysosomal trafficking, probably via association with the core HOPS complex in a discrete population of endosomes; the functions seems to be independent of VPS33B. May play a role in vesicular trafficking during spermatogenesis. May be involved in direct or indirect transcriptional regulation of E-cadherin. In Rattus norvegicus (Rat), this protein is Spermatogenesis-defective protein 39 homolog (Vipas39).